The following is a 140-amino-acid chain: Actin-depolymerizing factor 8 (140 aa).

At serine 6 the chain carries Phosphoserine. In terms of domain architecture, ADF-H spans 7-139 (GMHVNDECKI…SLDIIKGRLN (133 aa)).

The protein belongs to the actin-binding proteins ADF family. In terms of tissue distribution, expressed in the root trichoblast cells and developed root hairs.

It is found in the cytoplasm. The protein localises to the cytoskeleton. In terms of biological role, actin-depolymerizing protein. Severs actin filaments (F-actin) and binds to actin monomers. The chain is Actin-depolymerizing factor 8 (ADF8) from Arabidopsis thaliana (Mouse-ear cress).